A 442-amino-acid chain; its full sequence is Ribosomal protein uS12 methylthiotransferase RimO (442 aa).

The region spanning 13-129 (RSIFLLSLGC…ILNILGTAYD (117 aa)) is the MTTase N-terminal domain. Cys22, Cys58, Cys92, Cys153, Cys157, and Cys160 together coordinate [4Fe-4S] cluster. The 231-residue stretch at 139–369 (LSPSHYAWLK…MELQEGISEK (231 aa)) folds into the Radical SAM core domain. In terms of domain architecture, TRAM spans 372–439 (RALEEKALKV…AYELVGRIKN (68 aa)).

It belongs to the methylthiotransferase family. RimO subfamily. Requires [4Fe-4S] cluster as cofactor.

The protein resides in the cytoplasm. The catalysed reaction is L-aspartate(89)-[ribosomal protein uS12]-hydrogen + (sulfur carrier)-SH + AH2 + 2 S-adenosyl-L-methionine = 3-methylsulfanyl-L-aspartate(89)-[ribosomal protein uS12]-hydrogen + (sulfur carrier)-H + 5'-deoxyadenosine + L-methionine + A + S-adenosyl-L-homocysteine + 2 H(+). Catalyzes the methylthiolation of an aspartic acid residue of ribosomal protein uS12. The protein is Ribosomal protein uS12 methylthiotransferase RimO of Chlorobium phaeobacteroides (strain BS1).